A 211-amino-acid chain; its full sequence is Uracil phosphoribosyltransferase (211 aa).

5-phospho-alpha-D-ribose 1-diphosphate is bound by residues arginine 79, arginine 104, and 131–139 (DPMLATGGS). Residues isoleucine 196 and 201–203 (GDA) each bind uracil. Position 202 (aspartate 202) interacts with 5-phospho-alpha-D-ribose 1-diphosphate.

This sequence belongs to the UPRTase family. It depends on Mg(2+) as a cofactor.

It catalyses the reaction UMP + diphosphate = 5-phospho-alpha-D-ribose 1-diphosphate + uracil. Its pathway is pyrimidine metabolism; UMP biosynthesis via salvage pathway; UMP from uracil: step 1/1. With respect to regulation, allosterically activated by GTP. In terms of biological role, catalyzes the conversion of uracil and 5-phospho-alpha-D-ribose 1-diphosphate (PRPP) to UMP and diphosphate. The sequence is that of Uracil phosphoribosyltransferase from Lactococcus lactis subsp. cremoris (strain MG1363).